Here is a 367-residue protein sequence, read N- to C-terminus: Uroporphyrinogen decarboxylase (367 aa).

Residues 27-31 (RQAGR), Asp77, Tyr157, Thr212, and His333 contribute to the substrate site.

The protein belongs to the uroporphyrinogen decarboxylase family. Homodimer.

The protein localises to the cytoplasm. It carries out the reaction uroporphyrinogen III + 4 H(+) = coproporphyrinogen III + 4 CO2. Its pathway is porphyrin-containing compound metabolism; protoporphyrin-IX biosynthesis; coproporphyrinogen-III from 5-aminolevulinate: step 4/4. In terms of biological role, catalyzes the decarboxylation of four acetate groups of uroporphyrinogen-III to yield coproporphyrinogen-III. This is Uroporphyrinogen decarboxylase from Cupriavidus metallidurans (strain ATCC 43123 / DSM 2839 / NBRC 102507 / CH34) (Ralstonia metallidurans).